The chain runs to 179 residues: Ribulose bisphosphate carboxylase small subunit, chloroplastic 3 (179 aa).

The N-terminal 58 residues, 1–58 (MASSATMLSSVATAARAAPAQASMVAPFVGLKSASAFPVTQKPATGLSTLPSNGGRVQ), are a transit peptide targeting the chloroplast.

This sequence belongs to the RuBisCO small chain family. Heterohexadecamer of 8 large and 8 small subunits.

It is found in the plastid. It localises to the chloroplast. RuBisCO catalyzes two reactions: the carboxylation of D-ribulose 1,5-bisphosphate, the primary event in carbon dioxide fixation, as well as the oxidative fragmentation of the pentose substrate. Both reactions occur simultaneously and in competition at the same active site. Although the small subunit is not catalytic it is essential for maximal activity. This is Ribulose bisphosphate carboxylase small subunit, chloroplastic 3 from Fritillaria agrestis (Stinkbells).